A 298-amino-acid chain; its full sequence is 33 kDa chaperonin (298 aa).

Cystine bridges form between cysteine 239–cysteine 241 and cysteine 272–cysteine 275.

The protein belongs to the HSP33 family. Post-translationally, under oxidizing conditions two disulfide bonds are formed involving the reactive cysteines. Under reducing conditions zinc is bound to the reactive cysteines and the protein is inactive.

It is found in the cytoplasm. Functionally, redox regulated molecular chaperone. Protects both thermally unfolding and oxidatively damaged proteins from irreversible aggregation. Plays an important role in the bacterial defense system toward oxidative stress. The polypeptide is 33 kDa chaperonin (Picosynechococcus sp. (strain ATCC 27264 / PCC 7002 / PR-6) (Agmenellum quadruplicatum)).